The chain runs to 362 residues: Peptide chain release factor 1 (362 aa).

Gln-240 bears the N5-methylglutamine mark.

The protein belongs to the prokaryotic/mitochondrial release factor family. Post-translationally, methylated by PrmC. Methylation increases the termination efficiency of RF1.

It is found in the cytoplasm. In terms of biological role, peptide chain release factor 1 directs the termination of translation in response to the peptide chain termination codons UAG and UAA. The protein is Peptide chain release factor 1 of Bifidobacterium adolescentis (strain ATCC 15703 / DSM 20083 / NCTC 11814 / E194a).